We begin with the raw amino-acid sequence, 147 residues long: 3-hydroxyacyl-[acyl-carrier-protein] dehydratase FabZ (147 aa).

His-49 is an active-site residue.

This sequence belongs to the thioester dehydratase family. FabZ subfamily.

It is found in the cytoplasm. It catalyses the reaction a (3R)-hydroxyacyl-[ACP] = a (2E)-enoyl-[ACP] + H2O. In terms of biological role, involved in unsaturated fatty acids biosynthesis. Catalyzes the dehydration of short chain beta-hydroxyacyl-ACPs and long chain saturated and unsaturated beta-hydroxyacyl-ACPs. This chain is 3-hydroxyacyl-[acyl-carrier-protein] dehydratase FabZ, found in Syntrophotalea carbinolica (strain DSM 2380 / NBRC 103641 / GraBd1) (Pelobacter carbinolicus).